The sequence spans 187 residues: Transmembrane protein 11-B, mitochondrial (187 aa).

The next 2 helical transmembrane spans lie at 79 to 95 and 102 to 119; these read TAVL…LALP and VSLP…LYGI.

It belongs to the TMEM11 family.

The protein localises to the mitochondrion inner membrane. Functionally, plays a role in mitochondrial morphogenesis. This Xenopus laevis (African clawed frog) protein is Transmembrane protein 11-B, mitochondrial (tmem11-b).